A 166-amino-acid polypeptide reads, in one-letter code: NAD(P)H-quinone oxidoreductase subunit I, chloroplastic (166 aa).

2 consecutive 4Fe-4S ferredoxin-type domains span residues 55–84 (GRIHFEFDKCIACEVCVRVCPIDLPVVDWK) and 95–124 (LNYSIDFGICIFCGHCVEYCPTNCLSMTEE). [4Fe-4S] cluster contacts are provided by Cys-64, Cys-67, Cys-70, Cys-74, Cys-104, Cys-107, Cys-110, and Cys-114.

It belongs to the complex I 23 kDa subunit family. NDH is composed of at least 16 different subunits, 5 of which are encoded in the nucleus. The cofactor is [4Fe-4S] cluster.

The protein localises to the plastid. Its subcellular location is the chloroplast thylakoid membrane. It carries out the reaction a plastoquinone + NADH + (n+1) H(+)(in) = a plastoquinol + NAD(+) + n H(+)(out). The enzyme catalyses a plastoquinone + NADPH + (n+1) H(+)(in) = a plastoquinol + NADP(+) + n H(+)(out). Functionally, NDH shuttles electrons from NAD(P)H:plastoquinone, via FMN and iron-sulfur (Fe-S) centers, to quinones in the photosynthetic chain and possibly in a chloroplast respiratory chain. The immediate electron acceptor for the enzyme in this species is believed to be plastoquinone. Couples the redox reaction to proton translocation, and thus conserves the redox energy in a proton gradient. The sequence is that of NAD(P)H-quinone oxidoreductase subunit I, chloroplastic from Perymeniopsis ovalifolia.